A 55-amino-acid polypeptide reads, in one-letter code: uncharacterized protein (55 aa).

A disordered region spans residues 1–22 (MPALKSHVRPNSAAPARRQPWP).

This is an uncharacterized protein from Rhodobacter capsulatus (Rhodopseudomonas capsulata).